Consider the following 212-residue polypeptide: uncharacterized protein (212 aa).

This is an uncharacterized protein from Archaeoglobus fulgidus (strain ATCC 49558 / DSM 4304 / JCM 9628 / NBRC 100126 / VC-16).